A 353-amino-acid chain; its full sequence is Nicotinate-nucleotide--dimethylbenzimidazole phosphoribosyltransferase (353 aa).

Glutamate 318 serves as the catalytic Proton acceptor.

It belongs to the CobT family.

It catalyses the reaction 5,6-dimethylbenzimidazole + nicotinate beta-D-ribonucleotide = alpha-ribazole 5'-phosphate + nicotinate + H(+). It participates in nucleoside biosynthesis; alpha-ribazole biosynthesis; alpha-ribazole from 5,6-dimethylbenzimidazole: step 1/2. In terms of biological role, catalyzes the synthesis of alpha-ribazole-5'-phosphate from nicotinate mononucleotide (NAMN) and 5,6-dimethylbenzimidazole (DMB). The chain is Nicotinate-nucleotide--dimethylbenzimidazole phosphoribosyltransferase from Roseiflexus castenholzii (strain DSM 13941 / HLO8).